The following is a 267-amino-acid chain: Hydrolase FUB4 (267 aa).

Residues Ser93, Asp183, and His243 each act as charge relay system in the active site.

It belongs to the AB hydrolase 3 family.

Its pathway is mycotoxin biosynthesis. Functionally, hydrolase; part of the gene cluster that mediates the biosynthesis of fusaric acid, a mycotoxin with low to moderate toxicity to animals and humans, but with high phytotoxic properties. L-aspartate is suggested as fusaric acid amino acid precursor that is activated and further processed to O-acetyl-L-homoserine by cluster enzymes aspartate kinase FUB3 and homoserine O-acetyltransferase FUB5, as well as enzymes of the primary metabolism. The polyketide synthase (PKS) FUB1 generates the triketide trans-2-hexenal which is presumptively released by the hydrolase FUB4 and linked to the NRPS-bound amino acid precursor by NAD(P)-dependent dehydrogenase FUB6. FUB1, FUB4, and the non-canonical NRPS Fub8 may form an enzyme complex. Further processing of the NRPS-bound intermediate might be carried out by FUB6 and the sulfhydrylase FUB7, enabling a spontaneous electrocyclization to close the carbon backbone of fusaric acid. Dihydrofusaric acid is likely to be released via reduction by the thioester reductase (TR) domain of FUB8 whereupon the final oxidation to fusaric acid may (also) be performed by the FMN-dependent dehydrogenase FUB9. The polypeptide is Hydrolase FUB4 (Gibberella moniliformis (strain M3125 / FGSC 7600) (Maize ear and stalk rot fungus)).